An 868-amino-acid polypeptide reads, in one-letter code: MREKPEGGKGMAEHTPLMKQYFAAKAEYPDLLLFFRMGDFYELFHQDARKAARLLDITLTQRGSSGGAPIPMAGVPVHAYEGYLARLIALGESVAICEQIGDPGLAKGLVERKVVRIVTPGTITDEVLLEERRDTLLMALSRSKNCYGLAWADLAGGRFLVNEVNSEEALEAELARLEPAELLLPDEDAWPEYLQQRNGVRRRPPWLFDADSGRRKLLAFFKLHDLSGFGIENNPQATAAAGALLGYIEETQKQRLPHLTSITMETVGEAITMNAATRRHLELDTRVDGESRHTLLGVLDSTVTPMGGRLLRRWLHRPLRLREVVRQRHAAVGSMIDRDLDNKLMETFRRLGDMERILTRVALRSARPRDISTLRDSLSLLPRLRELLNASDSPRLRVLYAELGEHDSTASLLVKAVAEQPPLKLTDGGVIASEYDVELDELRKLSNNADQFLIDLETRERESSGISTLKVGYNRVHGYYIEISKGQADKAPVHYTRRQTLTNAERYITEELKAFEDKVLSARDRALVREKLLYEQLLDTVGAQLEPLKRCAAALSELDVLVCFAERAQTLDWVRPELEHTSCLHIEGGRHPVVEAVREQRFEPNDLDLHPERRMLVITGPNMGGKSTYMRQNALIVLLAYIGSYVPASRALIGPIDRIMTRIGAGDDLARGQSTFMLEMTETSYILHHATAQSLVLMDEIGRGTSTYDGLALADAVARHLAHINRCYTLFATHYFELTALADETYEGGLSGIANVHFDAVEHSERLVFMHTVKDGPANRSFGLQVAALAGLPAAAVAHARRRLAELEQRGRESHVSEITPLALDAPQQCSLFASAPSAAQEALVALHPDELTPKQALEALYRLKALL.

620–627 (GPNMGGKS) contacts ATP.

The protein belongs to the DNA mismatch repair MutS family.

This protein is involved in the repair of mismatches in DNA. It is possible that it carries out the mismatch recognition step. This protein has a weak ATPase activity. This is DNA mismatch repair protein MutS from Xylella fastidiosa (strain 9a5c).